The following is a 43-amino-acid chain: Protein PsbN (43 aa).

A helical membrane pass occupies residues leucine 7 to phenylalanine 27.

The protein belongs to the PsbN family.

It is found in the plastid. The protein localises to the chloroplast thylakoid membrane. In terms of biological role, may play a role in photosystem I and II biogenesis. The sequence is that of Protein PsbN from Rhodomonas salina (Cryptomonas salina).